The following is a 156-amino-acid chain: Small ribosomal subunit protein uS7 (156 aa).

The protein belongs to the universal ribosomal protein uS7 family. Part of the 30S ribosomal subunit. Contacts proteins S9 and S11.

In terms of biological role, one of the primary rRNA binding proteins, it binds directly to 16S rRNA where it nucleates assembly of the head domain of the 30S subunit. Is located at the subunit interface close to the decoding center, probably blocks exit of the E-site tRNA. The protein is Small ribosomal subunit protein uS7 of Bacillus mycoides (strain KBAB4) (Bacillus weihenstephanensis).